The primary structure comprises 973 residues: Piwi-like protein 2 (973 aa).

Positions 28–65 (WPQASKPLDPALGRGAPAGRGHVFGKPEEPSTQRGPAQ) are disordered. A compositionally biased stretch (low complexity) spans 34–48 (PLDPALGRGAPAGRG). Position 47 is a symmetric dimethylarginine (Arg47). Omega-N-methylarginine; by PRMT5; alternate occurs at positions 76 and 97. The residue at position 76 (Arg76) is a Symmetric dimethylarginine; by PRMT5; alternate. Arg97 bears the Symmetric dimethylarginine; alternate mark. Arg102 bears the Symmetric dimethylarginine; by PRMT5; alternate mark. The residue at position 102 (Arg102) is an Omega-N-methylarginine; alternate. A symmetric dimethylarginine mark is found at Arg146 and Arg158. A disordered region spans residues 162 to 199 (GISREVDKPPCTFSTPSRGPPQLSSPPALPQSPLHSPD). Arg165 bears the Symmetric dimethylarginine; by PRMT5 mark. The region spanning 389–502 (CVLDVMHAIY…LLPELSFMTG (114 aa)) is the PAZ domain. A Symmetric dimethylarginine; by PRMT5 modification is found at Arg551. Positions 668-959 (MVVCIIMGPR…LAFLSGHILH (292 aa)) constitute a Piwi domain. Catalysis depends on residues Asp745, Glu783, Asp815, and His948.

This sequence belongs to the argonaute family. Piwi subfamily. In terms of assembly, interacts with DDX4, MAEL, EIF3A, EIF4E, EIF4G, PRMT5 and WDR77. Associates with EIF4E- and EIF4G-containing m7G cap-binding complexes. Interacts (when methylated on arginine residues) with TDRD1 and TDRKH/TDRD2. Interacts with TDRD12. Component of the PET complex, at least composed of EXD1, PIWIL2, TDRD12 and piRNAs. Interacts with MOV10L1. Interacts with GPAT2. Interacts with TEX19. Interacts with GSK3B. Interacts (via PIWI domain) with BMAL1 and CLOCK. Interacts with TEX15. Requires Mg(2+) as cofactor. Post-translationally, arginine methylation by PRMT5 is required for the interaction with Tudor domain-containing protein TDRD1 and subsequent localization to the meiotic nuage, also named P granule. Expressed in adult testis and in most tumors.

The protein localises to the cytoplasm. Endoribonuclease that plays a central role during spermatogenesis by repressing transposable elements and preventing their mobilization, which is essential for the germline integrity. Plays an essential role in meiotic differentiation of spermatocytes, germ cell differentiation and in self-renewal of spermatogonial stem cells. Acts via the piRNA metabolic process, which mediates the repression of transposable elements during meiosis by forming complexes composed of piRNAs and Piwi proteins and govern the methylation and subsequent repression of transposons. During piRNA biosynthesis, plays a key role in the piRNA amplification loop, also named ping-pong amplification cycle, by acting as a 'slicer-competent' piRNA endoribonuclease that cleaves primary piRNAs, which are then loaded onto 'slicer-incompetent' PIWIL4. PIWIL2 slicing produces a pre-miRNA intermediate, which is then processed in mature piRNAs, and as well as a 16 nucleotide by-product that is degraded. Required for PIWIL4/MIWI2 nuclear localization and association with secondary piRNAs antisense. Besides their function in transposable elements repression, piRNAs are probably involved in other processes during meiosis such as translation regulation. Indirectly modulates expression of genes such as PDGFRB, SLC2A1, ITGA6, GJA7, THY1, CD9 and STRA8. When overexpressed, acts as an oncogene by inhibition of apoptosis and promotion of proliferation in tumors. Represses circadian rhythms by promoting the stability and activity of core clock components BMAL1 and CLOCK by inhibiting GSK3B-mediated phosphorylation and ubiquitination-dependent degradation of these proteins. This chain is Piwi-like protein 2 (PIWIL2), found in Homo sapiens (Human).